The following is a 438-amino-acid chain: Coenzyme A disulfide reductase (438 aa).

8-33 is a binding site for FAD; the sequence is GAVAGGATCASQIRRLDKESEIIVFE. Substrate-binding residues include Thr15, Gln19, Arg22, Ser39, and Asn42. Cys43 acts as the Nucleophile in catalysis. Residue Cys43 is the Redox-active of the active site. Lys71 contributes to the substrate binding site. 151-166 serves as a coordination point for NADP(+); it reads ALVVGAGYISLEVLEN. Residue 267-277 coordinates FAD; that stretch reads TNIPNIYALGD. His299 provides a ligand contact to substrate. An FAD-binding site is contributed by Tyr419. Substrate is bound at residue Lys427.

The protein belongs to the class-III pyridine nucleotide-disulfide oxidoreductase family. Homodimer. Requires FAD as cofactor.

The enzyme catalyses NADP(+) + 2 CoA = CoA-disulfide + NADPH + H(+). Its function is as follows. Catalyzes specifically the NADPH-dependent reduction of coenzyme A disulfide. This is Coenzyme A disulfide reductase from Staphylococcus epidermidis (strain ATCC 35984 / DSM 28319 / BCRC 17069 / CCUG 31568 / BM 3577 / RP62A).